The primary structure comprises 82 residues: Protein Vpu (82 aa).

Residues 1-7 (MQPIPIV) are Extracellular-facing. A helical transmembrane segment spans residues 8–28 (AIVALVVAIIIAIVVWSIVII). Topologically, residues 29-82 (EYRKILRQRKIDRLIDRLIERAEDSGNESEGEISALVEMGVEMGHHAPWDVDDL) are cytoplasmic. Residues serine 53 and serine 57 each carry the phosphoserine; by host CK2 modification.

It belongs to the HIV-1 VPU protein family. Homopentamer. Interacts with host CD4 and BRTC; these interactions induce proteasomal degradation of CD4. Interacts (via transmembrane region) with host BST2 (via transmembrane region); this interaction leads to the degradation of host BST2. Interacts with host FBXW11. Interacts with host AP1M1; this interaction plays a role in the mistrafficking and subsequent degradation of host BST2. Interacts with host RANBP2; this interaction allows Vpu to down-regulate host BLM sumoylation. Phosphorylated by host CK2. This phosphorylation is necessary for interaction with human BTRC and degradation of CD4.

Its subcellular location is the host membrane. Ion channel activity is inhibited by hexamethylene amiloride in vitro. Functionally, enhances virion budding by targeting host CD4 and Tetherin/BST2 to proteasome degradation. Degradation of CD4 prevents any unwanted premature interactions between viral Env and its host receptor CD4 in the endoplasmic reticulum. Degradation of antiretroviral protein Tetherin/BST2 is important for virion budding, as BST2 tethers new viral particles to the host cell membrane. Mechanistically, Vpu bridges either CD4 or BST2 to BTRC, a substrate recognition subunit of the Skp1/Cullin/F-box protein E3 ubiquitin ligase, induces their ubiquitination and subsequent proteasomal degradation. The alteration of the E3 ligase specificity by Vpu seems to promote the degradation of host IKBKB, leading to NF-kappa-B down-regulation and subsequent apoptosis. Acts as a viroporin that forms an oligomeric ion channel in membranes. Modulates the host DNA repair mechanisms to promote degradation of nuclear viral cDNA in cells that are already productively infected in order to suppress immune sensing and proviral hyper-integration (superinfection). Manipulates PML-NBs and modulates SUMOylation of host BLM protein thereby enhancing its DNA-end processing activity toward viral unintegrated linear DNA. Also inhibits RAD52-mediated homologous repair of viral cDNA, preventing the generation of dead-end circular forms of single copies of the long terminal repeat and permitting sustained nucleolytic attack. In Human immunodeficiency virus type 1 group M subtype B (isolate HXB2) (HIV-1), this protein is Protein Vpu.